We begin with the raw amino-acid sequence, 780 residues long: ATP-dependent 6-phosphofructokinase, liver type (780 aa).

Alanine 2 bears the N-acetylalanine mark. The tract at residues 2-390 (ASVDLEKLRT…NWNIYKLLSH (389 aa)) is N-terminal catalytic PFK domain 1. Residues glycine 25, 88–89 (RC), and 118–121 (GDGS) each bind ATP. Aspartate 119 contributes to the Mg(2+) binding site. Substrate contacts are provided by residues 164–166 (SID), arginine 201, 208–210 (MGR), glutamate 264, arginine 292, and 298–301 (HVQR). The active-site Proton acceptor is the aspartate 166. Residue serine 377 is modified to Phosphoserine. Residues 391–400 (QKISKEKTNF) form an interdomain linker region. The interval 401 to 780 (SLAILNVGAP…RRTLSIETGF (380 aa)) is C-terminal regulatory PFK domain 2. Beta-D-fructose 2,6-bisphosphate-binding positions include arginine 470, 527 to 531 (TISNN), arginine 565, 572 to 574 (MGG), and glutamate 628. Serine 529 carries an O-linked (GlcNAc) serine glycan. Residue tyrosine 640 is modified to Phosphotyrosine. Residues arginine 654, 660–663 (HLQQ), and arginine 734 each bind beta-D-fructose 2,6-bisphosphate. Serine 775 bears the Phosphoserine mark.

The protein belongs to the phosphofructokinase type A (PFKA) family. ATP-dependent PFK group I subfamily. Eukaryotic two domain clade 'E' sub-subfamily. As to quaternary structure, homo- and heterotetramers. Phosphofructokinase (PFK) enzyme functions as a tetramer composed of different combinations of 3 types of subunits, called PFKM (M), PFKL (L) and PFKP (P). The composition of the PFK tetramer differs according to the tissue type it is present in. The kinetic and regulatory properties of the tetrameric enzyme are dependent on the subunit composition, hence can vary across tissues. Requires Mg(2+) as cofactor. GlcNAcylation at Ser-529 by OGT decreases enzyme activity, leading to redirect glucose flux through the oxidative pentose phosphate pathway. Glycosylation is stimulated by both hypoxia and glucose deprivation.

The protein localises to the cytoplasm. It carries out the reaction beta-D-fructose 6-phosphate + ATP = beta-D-fructose 1,6-bisphosphate + ADP + H(+). It functions in the pathway carbohydrate degradation; glycolysis; D-glyceraldehyde 3-phosphate and glycerone phosphate from D-glucose: step 3/4. Its activity is regulated as follows. Allosterically activated by ADP, AMP, or fructose 2,6-bisphosphate, and allosterically inhibited by ATP or citrate. GlcNAcylation by OGT overcomes allosteric regulation. In terms of biological role, catalyzes the phosphorylation of D-fructose 6-phosphate to fructose 1,6-bisphosphate by ATP, the first committing step of glycolysis. Negatively regulates the phagocyte oxidative burst in response to bacterial infection by controlling cellular NADPH biosynthesis and NADPH oxidase-derived reactive oxygen species. Upon macrophage activation, drives the metabolic switch toward glycolysis, thus preventing glucose turnover that produces NADPH via pentose phosphate pathway. The chain is ATP-dependent 6-phosphofructokinase, liver type (PFKL) from Bos taurus (Bovine).